A 529-amino-acid polypeptide reads, in one-letter code: MLYLLPLSVSCRVPGSPPAPRSRRFLDPGGGRGVGDGLGGVRVFRRRALRGTDVRSNTSSSSSRKGRHDDARHDGGYGDDGDAGALLASVRRLLLSGSAQDDAAEGEAEEDEQGQFPKRWAIVFLCFSAFLLCNMDRVNMSIAILPMSAEFGWNPQTVGLIQSSFFWGYLLTQIAGGIWADTVGGKTVLGFGVIWWSIATALTPFAAKLGLPFLLVTRAFMGVGEGVAMPAMNNILSKWVPVSERSRSLALVYSGMYLGSVTGLAFSPLLIHNFGWPSVFYSFGSLGVFWFSTWASKAYSSPLEDPGISAEEKKLITSQTTGGEPVKEIPWGLILSKPPVWALIVSHFCHNWGTFILLTWMPTYYNQVLKFNLTESGLFCVLPWLTMAVSANFGGWIADTLVSRGLSVTTVRKIMQSIGFLGPAFFLTQLSHIDSPAMAVLCMACSQGTDAFSQSGLYSNHQDIGPRYAGVLLGLSNTAGVLAGVFGTAATGYILQHGSWDDVFKVSVVLYLVGTLVWNLFSTGEKIID.

The N-terminal 55 residues, methionine 1–arginine 55, are a transit peptide targeting the chloroplast. Disordered regions lie at residues valine 13–glycine 39 and threonine 52–glycine 78. Residues proline 28 to glycine 39 show a composition bias toward gly residues. Basic and acidic residues predominate over residues arginine 67 to glycine 76. 11 consecutive transmembrane segments (helical) span residues tryptophan 120 to methionine 140, valine 158 to isoleucine 178, threonine 187 to alanine 207, leucine 209 to methionine 229, leucine 251 to isoleucine 271, phenylalanine 274 to tryptophan 294, valine 340 to tryptophan 360, leucine 378 to alanine 398, isoleucine 418 to methionine 438, alanine 469 to alanine 489, and valine 503 to threonine 523.

Belongs to the major facilitator superfamily. Sodium/anion cotransporter (TC 2.A.1.14) family.

Its subcellular location is the plastid. It localises to the chloroplast membrane. Its function is as follows. Probable anion transporter. This Oryza sativa subsp. japonica (Rice) protein is Probable anion transporter 1, chloroplastic (PHT4;1).